Consider the following 156-residue polypeptide: Rhodanese-like domain-containing protein 17 (156 aa).

The Rhodanese domain occupies 44–146; that stretch reads LDSGYTFLDV…WVNKRFPVKV (103 aa). The active-site Cysteine persulfide intermediate is the C106.

The chain is Rhodanese-like domain-containing protein 17 (STR17) from Arabidopsis thaliana (Mouse-ear cress).